A 338-amino-acid polypeptide reads, in one-letter code: Solute carrier family 35 member G5 (338 aa).

Positions M1 to A21 are disordered. The next 9 helical transmembrane spans lie at T37–L57, L67–L87, C105–V125, C160–L180, A190–Y210, T221–L241, L250–V270, L281–L301, and V305–A325. The EamA 1 domain occupies L49–G174. Residues Y272 to A325 form the EamA 2 domain.

The protein belongs to the SLC35G solute transporter family.

The protein localises to the membrane. This is Solute carrier family 35 member G5 (SLC35G5) from Pan paniscus (Pygmy chimpanzee).